Here is a 168-residue protein sequence, read N- to C-terminus: Photosystem I assembly protein Ycf3 (168 aa).

TPR repeat units follow at residues Ala-35–Pro-68, Ser-72–Leu-105, and Gly-120–Asn-153.

Belongs to the Ycf3 family.

The protein resides in the plastid. Its subcellular location is the chloroplast thylakoid membrane. In terms of biological role, essential for the assembly of the photosystem I (PSI) complex. May act as a chaperone-like factor to guide the assembly of the PSI subunits. This chain is Photosystem I assembly protein Ycf3, found in Oenothera elata subsp. hookeri (Hooker's evening primrose).